A 324-amino-acid polypeptide reads, in one-letter code: Stomatin-like protein stl-1 (324 aa).

This sequence belongs to the band 7/mec-2 family. As to expression, widely expressed in most tissues, including body wall muscles, intestinal epithelia, and pharynx and head neurons.

The protein resides in the mitochondrion. Its function is as follows. Mitochondrial protein that probably regulates the biogenesis and the activity of mitochondria. In neurons, involved in mitochondrial fusion and recovery of normal locomotory behavior during reoxygenation; probably acts independently of egl-9 and the canonical hypoxia response pathway. In Caenorhabditis elegans, this protein is Stomatin-like protein stl-1.